A 120-amino-acid polypeptide reads, in one-letter code: UPF0231 protein ETA_08290 (120 aa).

This sequence belongs to the UPF0231 family.

The chain is UPF0231 protein ETA_08290 from Erwinia tasmaniensis (strain DSM 17950 / CFBP 7177 / CIP 109463 / NCPPB 4357 / Et1/99).